A 273-amino-acid chain; its full sequence is SPbeta prophage-derived uncharacterized protein YomF (273 aa).

A coiled-coil region spans residues 119–149; that stretch reads VIETLQGLIDEAEDTIIRMNERIAECERVTK.

The chain is SPbeta prophage-derived uncharacterized protein YomF (yomF) from Bacillus subtilis (strain 168).